We begin with the raw amino-acid sequence, 105 residues long: Small cysteine and glycine repeat-containing protein 6 (105 aa).

The interval cysteine 4 to glycine 83 is 13 X 2 AA repeats of CG.

Belongs to the KRTAP type 28 family.

Functionally, in the hair cortex, hair keratin intermediate filaments are embedded in an interfilamentous matrix, consisting of hair keratin-associated proteins (KRTAP), which are essential for the formation of a rigid and resistant hair shaft through their extensive disulfide bond cross-linking with abundant cysteine residues of hair keratins. The matrix proteins include the high-sulfur and high-glycine-tyrosine keratins. In Homo sapiens (Human), this protein is Small cysteine and glycine repeat-containing protein 6.